We begin with the raw amino-acid sequence, 1146 residues long: Probable phospholipid-transporting ATPase IIB (1146 aa).

Residues 1-143 (MADQIPLYPV…IKNQKYNVFT (143 aa)) lie on the Cytoplasmic side of the membrane. A helical transmembrane segment spans residues 144–164 (FIPGVLYEQFKFFLNLYFLVV). Over 165 to 172 (SCSQFVPA) the chain is Extracellular. Residues 173 to 193 (LKIGYLYTYWAPLGFVLAVTI) form a helical membrane-spanning segment. The Cytoplasmic segment spans residues 194–381 (AREAIDEFRR…LDLELNQLTK (188 aa)). Residues 382–402 (ALFLALVVLSVVMVTLQGFAG) traverse the membrane as a helical segment. Over 403–407 (PWYRN) the chain is Extracellular. A helical transmembrane segment spans residues 408–427 (LFRFLLLFSYIIPISLRVNL). Residues 428–938 (DMGKAAYGWM…ALGQFVMHRG (511 aa)) lie on the Cytoplasmic side of the membrane. Asp467 (4-aspartylphosphate intermediate) is an active-site residue. Residues Asp467, Lys468, and Thr469 each coordinate ATP. A Mg(2+)-binding site is contributed by Asp467. Position 469 (Thr469) interacts with Mg(2+). Residues 508–519 (VHSQPSGHNPSS) are compositionally biased toward polar residues. The interval 508–535 (VHSQPSGHNPSSAPLRRSQSSTPKVKKS) is disordered. 11 residues coordinate ATP: Glu590, Phe632, Lys637, Lys656, Arg685, Thr686, Thr765, Gly766, Asp767, Arg847, and Lys853. Asp873 is a binding site for Mg(2+). ATP contacts are provided by Asn876 and Asp877. Mg(2+) is bound at residue Asp877. Residues 939–959 (LIISTMQAVFSSVFYFASVPL) traverse the membrane as a helical segment. The Extracellular portion of the chain corresponds to 960-961 (YQ). A helical membrane pass occupies residues 962-982 (GFLMVGYATIYTMFPVFSLVL). The Cytoplasmic segment spans residues 983–1011 (DQDVKPEMAILYPELYKDLTKGRSLSFKT). The helical transmembrane segment at 1012–1032 (FLIWVLISIYQGGILMYGALL) threads the bilayer. Residues 1033–1040 (LFEDEFVH) lie on the Extracellular side of the membrane. Residues 1041–1061 (VVAISFTALILTELLMVALTI) form a helical membrane-spanning segment. Residues 1062 to 1065 (RTWH) are Cytoplasmic-facing. A helical transmembrane segment spans residues 1066–1086 (WLMVVAEFLSLGCYVASLAFL). At 1087–1105 (NEYFGIGRVSFGAFLDVAF) the chain is on the extracellular side. The chain crosses the membrane as a helical span at residues 1106-1128 (ITTVTFLWKVSAITVVSCLPLYV). The Cytoplasmic portion of the chain corresponds to 1129 to 1146 (LKYLKRKLSPPSYSKLSS).

The protein belongs to the cation transport ATPase (P-type) (TC 3.A.3) family. Type IV subfamily. It depends on Mg(2+) as a cofactor. In terms of tissue distribution, found in most tissues except spleen and muscle. Most abundant in testis. Also detected in fetal tissues.

Its subcellular location is the golgi apparatus. It localises to the trans-Golgi network membrane. The catalysed reaction is ATP + H2O + phospholipidSide 1 = ADP + phosphate + phospholipidSide 2.. The polypeptide is Probable phospholipid-transporting ATPase IIB (Atp9b) (Mus musculus (Mouse)).